Consider the following 360-residue polypeptide: Phospho-N-acetylmuramoyl-pentapeptide-transferase (360 aa).

10 helical membrane-spanning segments follow: residues 21–41 (YLTL…ILIG), 73–93 (TMGG…WADL), 97–117 (YVLV…VDDY), 134–154 (YFWQ…SATM), 168–188 (VFPQ…VGTS), 199–219 (GLAI…AYVT), 239–259 (LVIV…FNTY), 263–283 (VFMG…LAVL), 288–308 (LVLI…ILQV), and 338–358 (VIVR…ATLK).

This sequence belongs to the glycosyltransferase 4 family. MraY subfamily. Mg(2+) serves as cofactor.

It localises to the cell inner membrane. It carries out the reaction UDP-N-acetyl-alpha-D-muramoyl-L-alanyl-gamma-D-glutamyl-meso-2,6-diaminopimeloyl-D-alanyl-D-alanine + di-trans,octa-cis-undecaprenyl phosphate = di-trans,octa-cis-undecaprenyl diphospho-N-acetyl-alpha-D-muramoyl-L-alanyl-D-glutamyl-meso-2,6-diaminopimeloyl-D-alanyl-D-alanine + UMP. It functions in the pathway cell wall biogenesis; peptidoglycan biosynthesis. Its function is as follows. Catalyzes the initial step of the lipid cycle reactions in the biosynthesis of the cell wall peptidoglycan: transfers peptidoglycan precursor phospho-MurNAc-pentapeptide from UDP-MurNAc-pentapeptide onto the lipid carrier undecaprenyl phosphate, yielding undecaprenyl-pyrophosphoryl-MurNAc-pentapeptide, known as lipid I. This is Phospho-N-acetylmuramoyl-pentapeptide-transferase from Alteromonas mediterranea (strain DSM 17117 / CIP 110805 / LMG 28347 / Deep ecotype).